The sequence spans 1348 residues: MELGPLRVLTVLLCLAPVFAGLFISMDQPTLSIQKSVLTITTNDTLNITCSGQRAVYWSWPNNQSSVEKRLAVTGCSEGPFCKTLTLLRVIGNDTGDYRCLYGDSQAATTIYVYVQDYRSPFVTSVGDQLGIVYITKNKTVVVPCLGTVSNLNVSLHAKYPEKVFVPDGKSISWDNKKGFTIPSHLINYAGMVFCEAKIDNESYQSVIYIVAVVGYRIYDLTMNPHYQVELAVGEKLVLNCTVRTELNVGIDFRWDYPSIKERRATIRDLKTTAGEIKTFVSTLTIESVNLSDKGRYTCAASSGRMNMKNSSYFIIHESPFIHLEKMENVVEMKLGDTVSIPVKFKGYPPPEAKWYKNGKVINANHTVKLGYALVITEATEKDAGNYTVVLTNPTNKMQKRHTFTLLVNVPPQIGENALMAPVDSYKYGSTQALTCTIYAVPPPAAVLWYWQLEEECTFSPQKVRLGANPYACRKWKVISERKGGNQVEIKQRVVTIAGKTKTVSTLVIQAANVSALYRCMATNRAGSSERVISFHVTRGLEINLQPRSQLTEKDNTSLQCTADKFTFEKLSWYKLSTHVSQTPFGGLPMPVCKNLDALQKLNATVSNVNGENVTLELILRNISLQDGGDYVCIAQDKKAKTQHCLVKHLTVQEPLHPRLVGNLENQTTNIGETIEVLCTVNGVPPPNITWFKNSETLFEDSGIVLKDGNKTLTIRRVRKEDGGLYTCLACNILGCKKAEAFFSVQGAEEKTNLELIILVGTAVIAMFFWLLLVIILRTVKRANGGDMKTGYLSIIMDPDEVPIDEHCERLPYDASKWEFPRDRLKLGKPLGRGAFGQVIEADAFGIDKTATCRTVAVKMLKEGATHSEHRALMSELKILIHIGHHLNVVNLLGACTKPGGPLMVIVEYCKFGNLSAYLRSKRSEFIPYKMKSARFRQGKENYTGDISTDLKQRLDSITSSQSSTSSGFVEERSLSDVEEEDAGSEDLCKNPLTMEDLICYSFQVARGMEFLASRKCIHRDLAARNILLSDNNVVKICDFGLARDIYKDPDYVRKGDARLPLKWMAPETIFDRVYTIQSDVWSFGVLLWEIFSLGASPYPGVKIDEEFCRRLKEGTRMRAPDYTTPEMYQTMLDCWHGDPKQRPTFSELVEHLGNLLQANVRQDGKDYVVLPLSVSLNMEEDSGLSLPTSPASCKEEEEVCDPKFHYDNTAGISQYRQGSKRKSRPVSVKTFEDIPLVTTVKVVQEENQTDSGMVLASEELKTLEEQDKQVKIPFSTLAPSKSNESVMSEASNQTSGYQSGYHSDDMDNMVCSSEDTELLCAQEASPTLPRCAWPGIYSPAPVASLPL.

The signal sequence occupies residues 1 to 20 (MELGPLRVLTVLLCLAPVFA). Topologically, residues 21-756 (GLFISMDQPT…GAEEKTNLEL (736 aa)) are extracellular. Asn43, Asn47, Asn63, Asn93, Asn138, Asn153, Asn201, Asn240, Asn290, Asn310, Asn365, Asn386, Asn513, Asn556, Asn603, Asn613, Asn622, Asn666, Asn688, and Asn710 each carry an N-linked (GlcNAc...) asparagine glycan. Ig-like C2-type domains are found at residues 43–106 (NDTL…GDSQ), 138–202 (NKTV…IDNE), 220–312 (DLTM…KNSS), 320–405 (PFIH…HTFT), 412–534 (PQIG…RVIS), 540–651 (GLEI…KHLT), and 658–744 (PRLV…AFFS). Cys50 and Cys100 are oxidised to a cystine. Cysteines 145 and 195 form a disulfide. The cysteines at positions 241 and 299 are disulfide-linked. Cysteines 436 and 520 form a disulfide. Cys561 and Cys633 form a disulfide bridge. A disulfide bridge connects residues Cys679 and Cys728. A helical transmembrane segment spans residues 757-777 (IILVGTAVIAMFFWLLLVIIL). Over 778-1348 (RTVKRANGGD…SPAPVASLPL (571 aa)) the chain is Cytoplasmic. Residues 825 to 1155 (LKLGKPLGRG…FSELVEHLGN (331 aa)) form the Protein kinase domain. ATP contacts are provided by residues 831 to 839 (LGRGAFGQV) and Lys859. The segment covering 958-967 (ITSSQSSTSS) has biased composition (low complexity). The segment at 958–983 (ITSSQSSTSSGFVEERSLSDVEEEDA) is disordered. Asp1021 acts as the Proton acceptor in catalysis. Tyr1047, Tyr1052, Tyr1168, and Tyr1207 each carry phosphotyrosine; by autocatalysis. Positions 1280–1302 (PSKSNESVMSEASNQTSGYQSGY) are disordered.

The protein belongs to the protein kinase superfamily. Tyr protein kinase family. CSF-1/PDGF receptor subfamily. Post-translationally, autophosphorylated on tyrosine residues upon ligand binding. Autophosphorylation occurs in trans, i.e. one subunit of the dimeric receptor phosphorylates tyrosine residues on the other subunit. As to expression, in all endothelial tissues during onset of vascularization. In later development, present in lung, heart, intestine and skin.

It is found in the cell membrane. The protein resides in the cytoplasmic vesicle. Its subcellular location is the early endosome. It localises to the cell junction. The protein localises to the endoplasmic reticulum. The enzyme catalyses L-tyrosyl-[protein] + ATP = O-phospho-L-tyrosyl-[protein] + ADP + H(+). With respect to regulation, present in an inactive conformation in the absence of bound ligand. Binding of VEGFA, VEGFC or VEGFD leads to dimerization and activation by autophosphorylation on tyrosine residues. Tyrosine-protein kinase that acts as a cell-surface receptor for VEGFA, VEGFC and/or VEGFD and plays an essential role in the regulation of angiogenesis and vascular development. Promotes proliferation, survival, migration and differentiation of endothelial cells. Promotes reorganization of the actin cytoskeleton. Binding of vascular growth factors leads to the activation of several signaling cascades. Activation of PLCG1 leads to the production of the cellular signaling molecules diacylglycerol and inositol 1,4,5-trisphosphate and the activation of protein kinase C. Mediates activation of MAPK1/ERK2, MAPK3/ERK1 and the MAP kinase signaling pathway, as well as of the AKT1 signaling pathway. Mediates phosphorylation of PIK3R1, the regulatory subunit of phosphatidylinositol 3-kinase, reorganization of the actin cytoskeleton and activation of PTK2/FAK1. Required for VEGFA-mediated induction of NOS2 and NOS3, leading to the production of the signaling molecule nitric oxide (NO) by endothelial cells. The polypeptide is Vascular endothelial growth factor receptor 2 (Coturnix japonica (Japanese quail)).